Here is a 439-residue protein sequence, read N- to C-terminus: MRGAYYVLAALLVVASSQIAAEFGHQLPVYDDGIMAARNAVVKTLPKRYLRGGHDVHDDSANEERSLYSVLVSLINEGVMKLPRATEELNMMPRAADDVEVMFRPAEVNEEMPHITKEELKKASKSAKEALKKLWKPASRTAADGHASHDIPTGEKLYLDLEAWDIKEFHMRGGSVIKKHRSMIASVHQEFLNLCDPNLHPTAAETSLLWGMFHWKPELCTIEIHGRNLMRLAKRDVQKGVLKITSNELLDNQWNQLSDTHKLSVQNCLLNLYYQRWVRMYNIFKRNRPDLIAAPLNLELNLGTSSALALRKHSQVPSNAASTSNVKSSVITKRSKRTFDSNTGTISLSSKQAKMQSSKSVVPLLTGATTSGEHVVPMQNLKLSLGGPSGGFAPYEPPKAHSLKSLTPASTALTLEDSETKLSLGGIYDKRTDKAPSVP.

A signal peptide spans 1-21; it reads MRGAYYVLAALLVVASSQIAA. Residues 48–65 carry the RxLR-dEER motif; that stretch reads RYLRGGHDVHDDSANEER.

It belongs to the RxLR effector family.

It is found in the secreted. The protein localises to the host nucleus. In terms of biological role, secreted effector that acts as an elicitor that induces cell death in host plant cells. The protein is Secreted RxLR effector protein 117 of Plasmopara viticola (Downy mildew of grapevine).